A 957-amino-acid polypeptide reads, in one-letter code: AP2-associated protein kinase 1 (957 aa).

At M1 the chain carries N-acetylmethionine. Positions 1–11 (MKKFFDSRREQ) are enriched in basic and acidic residues. The segment at 1–25 (MKKFFDSRREQGGSGLGSGSSGGGG) is disordered. Positions 12-25 (GGSGLGSGSSGGGG) are enriched in gly residues. S14 carries the phosphoserine modification. The Protein kinase domain maps to 46–315 (VTVDEVLAEG…QVSYFSFKLL (270 aa)). ATP contacts are provided by residues 52-60 (LAEGGFAIV) and K74. Catalysis depends on D176, which acts as the Proton acceptor. Y234 is modified (phosphotyrosine). Position 235 is a phosphoserine (S235). 2 disordered regions span residues 326–506 (NSPI…AVHP) and 563–629 (TAAA…AGHR). Phosphothreonine occurs at positions 354 and 389. R391 bears the Omega-N-methylarginine mark. A compositionally biased stretch (pro residues) spans 436 to 448 (PQAPPTSQQPPSA). T441 bears the Phosphothreonine mark. 2 stretches are compositionally biased toward low complexity: residues 449-506 (PAQA…AVHP) and 563-601 (TAAAAPQPQAQPAAAASPAPAQEPAQIQAPVRQQPKVQT). T602 carries the phosphothreonine modification. Over residues 607 to 617 (IQGQKLGSLTP) the composition is skewed to polar residues. S614 is subject to Phosphoserine. Phosphothreonine is present on T616. A phosphoserine mark is found at S619, S620, S633, and S646. T649 is modified (phosphothreonine). The interval 660–697 (SLNKSKSATTTPSGSPRASQQNVYNPSEGSTWNPFDDD) is disordered. Over residues 668–692 (TTTPSGSPRASQQNVYNPSEGSTWN) the composition is skewed to polar residues. Y683 bears the Phosphotyrosine mark. A phosphoserine mark is found at S727, S842, S933, and S934. The clathrin-binding domain (CBD) stretch occupies residues 819–956 (EKADVAVESL…SLLLVDQLID (138 aa)). 2 disordered regions span residues 832-855 (LEPPVPQRLPSQTESVTSNRTDSL) and 919-941 (VLITKNPQGGHSRNSSGSSESSL). Residues 840 to 855 (LPSQTESVTSNRTDSL) show a composition bias toward polar residues. Positions 927–940 (GGHSRNSSGSSESS) are enriched in low complexity.

The protein belongs to the protein kinase superfamily. Ser/Thr protein kinase family. In terms of assembly, interacts (via CBD domain) with clathrin. Interacts with AP-2 complex. Interacts with NUMB. Interacts with alpha-adaptin. Interacts with EPS15 isoform 2. Interacts with membrane-bound activated NOTCH1 but not with the inactive full-length form of NOTCH1. Preferentially interacts with monoubiquitinated activated NOTCH1 compared to the non-ubiquitinated form. Post-translationally, autophosphorylated. Detected in brain (at protein level).

It localises to the cell membrane. Its subcellular location is the membrane. It is found in the clathrin-coated pit. The protein resides in the presynapse. The enzyme catalyses L-seryl-[protein] + ATP = O-phospho-L-seryl-[protein] + ADP + H(+). The catalysed reaction is L-threonyl-[protein] + ATP = O-phospho-L-threonyl-[protein] + ADP + H(+). Stimulated by clathrin. Regulates clathrin-mediated endocytosis by phosphorylating the AP2M1/mu2 subunit of the adaptor protein complex 2 (AP-2) which ensures high affinity binding of AP-2 to cargo membrane proteins during the initial stages of endocytosis. Preferentially, may phosphorylate substrates on threonine residues. Regulates phosphorylation of other AP-2 subunits as well as AP-2 localization and AP-2-mediated internalization of ligand complexes. Phosphorylates NUMB and regulates its cellular localization, promoting NUMB localization to endosomes. Binds to and stabilizes the activated form of NOTCH1, increases its localization in endosomes and regulates its transcriptional activity. This chain is AP2-associated protein kinase 1 (AAK1), found in Bos taurus (Bovine).